Reading from the N-terminus, the 93-residue chain is U12-lycotoxin-Ls1a (93 aa).

Residues 1–18 form the signal peptide; sequence MKFAVILLFSLVVLAVAS. Positions 19–38 are excised as a propeptide; sequence ESVEEVRREIDIEDLPEQQR.

It belongs to the neurotoxin 31 family. In terms of processing, contains 5 disulfide bonds. As to expression, expressed by the venom gland.

Its subcellular location is the secreted. This chain is U12-lycotoxin-Ls1a, found in Lycosa singoriensis (Wolf spider).